The following is a 368-amino-acid chain: Homoserine O-acetyltransferase (368 aa).

The AB hydrolase-1 domain maps to 43–354; sequence NVVVVCHALT…DYGHDAFLVE (312 aa). Catalysis depends on Ser-148, which acts as the Nucleophile. A substrate-binding site is contributed by Arg-220. Catalysis depends on residues Asp-314 and His-348. Asp-349 is a binding site for substrate.

It belongs to the AB hydrolase superfamily. MetX family. In terms of assembly, homodimer.

The protein resides in the cytoplasm. It catalyses the reaction L-homoserine + acetyl-CoA = O-acetyl-L-homoserine + CoA. It functions in the pathway amino-acid biosynthesis; L-methionine biosynthesis via de novo pathway; O-acetyl-L-homoserine from L-homoserine: step 1/1. Transfers an acetyl group from acetyl-CoA to L-homoserine, forming acetyl-L-homoserine. This Sulfurimonas autotrophica (strain ATCC BAA-671 / DSM 16294 / JCM 11897 / OK10) protein is Homoserine O-acetyltransferase.